The following is a 213-amino-acid chain: Putative 3-methyladenine DNA glycosylase (213 aa).

It belongs to the DNA glycosylase MPG family.

This chain is Putative 3-methyladenine DNA glycosylase, found in Latilactobacillus sakei subsp. sakei (strain 23K) (Lactobacillus sakei subsp. sakei).